We begin with the raw amino-acid sequence, 254 residues long: Vitamin B12 import ATP-binding protein BtuD (254 aa).

Residues 3–239 (INYISVGNRL…ENLQQVFETP (237 aa)) enclose the ABC transporter domain. 29 to 36 (GPNGSGKS) is a binding site for ATP.

The protein belongs to the ABC transporter superfamily. Vitamin B12 importer (TC 3.A.1.13.1) family. The complex is composed of two ATP-binding proteins (BtuD), two transmembrane proteins (BtuC) and a solute-binding protein (BtuF).

It is found in the cell inner membrane. The enzyme catalyses an R-cob(III)alamin(out) + ATP + H2O = an R-cob(III)alamin(in) + ADP + phosphate + H(+). Part of the ABC transporter complex BtuCDF involved in vitamin B12 import. Responsible for energy coupling to the transport system. The chain is Vitamin B12 import ATP-binding protein BtuD from Vibrio vulnificus (strain CMCP6).